Reading from the N-terminus, the 192-residue chain is Elongation factor P (192 aa).

Belongs to the elongation factor P family.

It is found in the cytoplasm. It functions in the pathway protein biosynthesis; polypeptide chain elongation. Involved in peptide bond synthesis. Stimulates efficient translation and peptide-bond synthesis on native or reconstituted 70S ribosomes in vitro. Probably functions indirectly by altering the affinity of the ribosome for aminoacyl-tRNA, thus increasing their reactivity as acceptors for peptidyl transferase. In Borrelia recurrentis (strain A1), this protein is Elongation factor P.